A 51-amino-acid chain; its full sequence is Insulin (51 aa).

Cystine bridges form between Cys8–Cys37, Cys20–Cys50, and Cys36–Cys41.

The protein belongs to the insulin family. Heterodimer of a B chain and an A chain linked by two disulfide bonds.

Its subcellular location is the secreted. In terms of biological role, insulin decreases blood glucose concentration. It increases cell permeability to monosaccharides, amino acids and fatty acids. It accelerates glycolysis, the pentose phosphate cycle, and glycogen synthesis in liver. The protein is Insulin of Pagrus major (Red sea bream).